Reading from the N-terminus, the 413-residue chain is MTKTRHLTILGSTGSIGESTLDVVARHPGRYQVVALTADRNVEKMFEQCIQFHPPYAVMLDAQSAEQLEDRLHAAGLDTRVLSGIESLEKVASLPEIDTVMAAIVGAAGIRPTLAAARTGKHILLANKETLVMAGRVFMDTLRQHHATLLPIDSEHNAIFQSLPQHFNGDLAGSGVRRILLTASGGPFRTVDLKILETVTPEQACAHPNWVMGRKISVDSATMMNKGLEVIEAHWLFNAVPEKIQVVIHPQSVIHSMVEYIDGSVLAQLGNPDMRTPIAHALSYPERMESGVQSLDMFKVARLDFESPDFKRFPCLRLAYEALAAGGNMPAVLNAANEVAVEVFLAGRIPFTAIPVMIEDVMKSTERRDVPDLEGVLLADLQARATAREWLACNIRQSTGQPGKPASSLSAGQ.

Positions 13, 14, 15, 16, 40, 41, and 127 each coordinate NADPH. Lysine 128 contributes to the 1-deoxy-D-xylulose 5-phosphate binding site. Residue glutamate 129 coordinates NADPH. Position 153 (aspartate 153) interacts with Mn(2+). The 1-deoxy-D-xylulose 5-phosphate site is built by serine 154, glutamate 155, serine 184, and histidine 207. Residue glutamate 155 participates in Mn(2+) binding. Glycine 213 lines the NADPH pocket. Residues serine 220, asparagine 225, lysine 226, and glutamate 229 each contribute to the 1-deoxy-D-xylulose 5-phosphate site. Residue glutamate 229 participates in Mn(2+) binding.

Belongs to the DXR family. The cofactor is Mg(2+). Mn(2+) serves as cofactor.

The enzyme catalyses 2-C-methyl-D-erythritol 4-phosphate + NADP(+) = 1-deoxy-D-xylulose 5-phosphate + NADPH + H(+). It functions in the pathway isoprenoid biosynthesis; isopentenyl diphosphate biosynthesis via DXP pathway; isopentenyl diphosphate from 1-deoxy-D-xylulose 5-phosphate: step 1/6. Catalyzes the NADPH-dependent rearrangement and reduction of 1-deoxy-D-xylulose-5-phosphate (DXP) to 2-C-methyl-D-erythritol 4-phosphate (MEP). This chain is 1-deoxy-D-xylulose 5-phosphate reductoisomerase, found in Nitrosomonas europaea (strain ATCC 19718 / CIP 103999 / KCTC 2705 / NBRC 14298).